A 399-amino-acid chain; its full sequence is MTPSAASALVEKTPLETYVPPAKPSLIGLSRAQLCDRLGDVGVAPPQRKMRAQQLWHWMYVRGARDFSEMTNVSKEMRATLAEHFTVDRPEVVAEQISADGTRKWLLRLPSGGDGQKAHEVECVYIPETDRGTLCVSSQVGCTLNCAFCHTGTQRLVRNLTAGEIVGQVMVARDRLGDWIDRETPNGNRLITNIVMMGMGEPLYNFDAVRDALLIVSDNEGIGISRRRITLSTSGVVPNIKRTGDEIGVMLAISLHAVRDELRDELVPLNRKYPLKELLQACRDYPGASNARRITFEYVMLKGVNDSLDDARKLVQLLKGIPAKINLIPFNPWPGSNYECSDWDQIEKFSEYVFNAGYSSPVRTPRGRDILAACGQLKSETEKLSVRERNALRAMAMTD.

The Proton acceptor role is filled by glutamate 122. The Radical SAM core domain maps to 128 to 371 (ETDRGTLCVS…VRTPRGRDIL (244 aa)). Cysteine 135 and cysteine 374 are disulfide-bonded. The [4Fe-4S] cluster site is built by cysteine 142, cysteine 146, and cysteine 149. Residues 200-201 (GE), serine 232, 254-256 (SLH), and asparagine 331 each bind S-adenosyl-L-methionine. The active-site S-methylcysteine intermediate is the cysteine 374.

This sequence belongs to the radical SAM superfamily. RlmN family. It depends on [4Fe-4S] cluster as a cofactor.

It is found in the cytoplasm. It catalyses the reaction adenosine(2503) in 23S rRNA + 2 reduced [2Fe-2S]-[ferredoxin] + 2 S-adenosyl-L-methionine = 2-methyladenosine(2503) in 23S rRNA + 5'-deoxyadenosine + L-methionine + 2 oxidized [2Fe-2S]-[ferredoxin] + S-adenosyl-L-homocysteine. It carries out the reaction adenosine(37) in tRNA + 2 reduced [2Fe-2S]-[ferredoxin] + 2 S-adenosyl-L-methionine = 2-methyladenosine(37) in tRNA + 5'-deoxyadenosine + L-methionine + 2 oxidized [2Fe-2S]-[ferredoxin] + S-adenosyl-L-homocysteine. Specifically methylates position 2 of adenine 2503 in 23S rRNA and position 2 of adenine 37 in tRNAs. m2A2503 modification seems to play a crucial role in the proofreading step occurring at the peptidyl transferase center and thus would serve to optimize ribosomal fidelity. The protein is Dual-specificity RNA methyltransferase RlmN of Rhodopseudomonas palustris (strain TIE-1).